Consider the following 1019-residue polypeptide: MPRSSATARKSHSNRHENGSANTGKKVAKQKSNGHLNGNLNGGSASSSLSSSQVDLPSSRSSSDPVIPTTTATSTKLNGTPDSSKGDCNAPDHLNGYAKGNTDMSYVQNNGVASQTGGDVAGPASRRTEKSATGNKRSPSNASINPLQLASTILKSCPMYDTIAILIFLLQLPPMVLTLVQFLFASLTFLPPSGASAGSLTSNFDIFQGPAGTPSLGTMIAMDGFCLLIWGLFMWTWAQNFALDLAHVQVAITLGGGGFGKNGGVNTLCVGIVLIMHLVRSKGIQDFVIGHLLSSNIISPDMLSQYSHLLPTEFRRTEPQTSPSWLRSLLAVHILAQAGTAMARRSMAKNRTPNPPRTGKRIDTEASAGSQTQIDSAFESGASVSSYIGADGQIVTPAAHKDGRDRLLSAKKRRRQANQVRSRQPFWAALASTKITVMREYEHSRALSKTARGLPMTEDDLQGLSLDDGLVWITEIDSSTIKFAAGDFSSADDSSGSGACEAGCLGSEDMEPFYVCVNGALWATATICKVHDAPKGSSMVHWRGEISGLAPNCAYTCSFVRSDTDEEICVISVKTPATNDAEQVSSVSTPPQPSYRPSSPTTTLKNSIVNAEAKLNEKRSRLRKAKNDHKLVISKIRKELDNYNHRLHSGTDENRQKQRSLQLERNIRQTEEATALLEDQLDNLENVPDEELRKWSDQKAKYEHELGLLNSAKEELASARSAVAREVSSLETELSSAIQRRERLQSRRTRINEQYERIVSANAQGLNERERRAAEQFAREQDQAKLEATFNEQFASIGQSVQEYQLRAQQIWQQCDAIEQAIQQQHQQMLLDPGPLTPEGNLPGTNPFSESALPLGALTSTAPSNRSLLGLSFPPLKSSPLQTASSPVGASSSHPTSPVQQPSYLNFPTSPLVNASSHLDSDFVYRDRSFSNRSARSSLYGSDFMDSSRRQPFQLDLSELLADKRSPGSDSNTALNSGLRPVSSPFQRAGSRGSGSGSNGSGGSGSGSGSPSSVYGKTN.

The disordered stretch occupies residues 1–142 (MPRSSATARK…TGNKRSPSNA (142 aa)). Low complexity predominate over residues 33–63 (NGHLNGNLNGGSASSSLSSSQVDLPSSRSSS). 3 stretches are compositionally biased toward polar residues: residues 68-83 (PTTT…TPDS), 102-117 (TDMS…SQTG), and 131-142 (SATGNKRSPSNA). 3 helical membrane-spanning segments follow: residues 163–183 (IAIL…VQFL), 216–236 (LGTM…FMWT), and 259–279 (FGKN…MHLV). Disordered stretches follow at residues 343-372 (ARRS…GSQT), 580-603 (DAEQ…PTTT), 831-859 (LDPG…GALT), 879-905 (SPLQ…PSYL), and 963-1019 (DKRS…GKTN). The stretch at 602 to 788 (TTLKNSIVNA…REQDQAKLEA (187 aa)) forms a coiled coil. Positions 992–1008 (RGSGSGSNGSGGSGSGS) are enriched in gly residues.

Belongs to the acrB family.

The protein resides in the membrane. Component of the regulatory network controlling carbon source utilization through ubiquitination and deubiquitination involving creA, creB, creC, creD and acrB. Involved in resistance to acriflavine, and required for normal growth on a range of sole carbon sources, including fructose, cellobiose, raffinose, and starch, and reduced utilization of amino acids, including GABA and beta-alanine, as sole carbon and nitrogen sources. The polypeptide is Probable ubiquitination network signaling protein acrB (acrB) (Neosartorya fischeri (strain ATCC 1020 / DSM 3700 / CBS 544.65 / FGSC A1164 / JCM 1740 / NRRL 181 / WB 181) (Aspergillus fischerianus)).